The sequence spans 367 residues: Peptide chain release factor 2 (367 aa).

Glutamine 254 carries the post-translational modification N5-methylglutamine.

Belongs to the prokaryotic/mitochondrial release factor family. Post-translationally, methylated by PrmC. Methylation increases the termination efficiency of RF2.

It localises to the cytoplasm. Its function is as follows. Peptide chain release factor 2 directs the termination of translation in response to the peptide chain termination codons UGA and UAA. In Neisseria gonorrhoeae (strain ATCC 700825 / FA 1090), this protein is Peptide chain release factor 2.